A 414-amino-acid chain; its full sequence is Serine hydroxymethyltransferase (414 aa).

(6S)-5,6,7,8-tetrahydrofolate-binding positions include L121 and 125 to 127 (GHL). K229 is modified (N6-(pyridoxal phosphate)lysine).

Belongs to the SHMT family. Homodimer. Requires pyridoxal 5'-phosphate as cofactor.

The protein resides in the cytoplasm. The enzyme catalyses (6R)-5,10-methylene-5,6,7,8-tetrahydrofolate + glycine + H2O = (6S)-5,6,7,8-tetrahydrofolate + L-serine. It functions in the pathway one-carbon metabolism; tetrahydrofolate interconversion. Its pathway is amino-acid biosynthesis; glycine biosynthesis; glycine from L-serine: step 1/1. Catalyzes the reversible interconversion of serine and glycine with tetrahydrofolate (THF) serving as the one-carbon carrier. This reaction serves as the major source of one-carbon groups required for the biosynthesis of purines, thymidylate, methionine, and other important biomolecules. Also exhibits THF-independent aldolase activity toward beta-hydroxyamino acids, producing glycine and aldehydes, via a retro-aldol mechanism. The polypeptide is Serine hydroxymethyltransferase (Polynucleobacter necessarius subsp. necessarius (strain STIR1)).